Reading from the N-terminus, the 211-residue chain is Large ribosomal subunit protein uL3 (211 aa).

Belongs to the universal ribosomal protein uL3 family. Part of the 50S ribosomal subunit. Forms a cluster with proteins L14 and L19.

In terms of biological role, one of the primary rRNA binding proteins, it binds directly near the 3'-end of the 23S rRNA, where it nucleates assembly of the 50S subunit. The polypeptide is Large ribosomal subunit protein uL3 (Geobacter sp. (strain M21)).